The sequence spans 54 residues: LAAVDCSEYPKPACTMEHRPLCGSDNQTYDNKCNFCNAVVESNGTLTLSHFGKC.

A Kazal-like domain is found at 4–54 (VDCSEYPKPACTMEHRPLCGSDNQTYDNKCNFCNAVVESNGTLTLSHFGKC). 3 disulfides stabilise this stretch: Cys6–Cys36, Cys14–Cys33, and Cys22–Cys54. An N-linked (GlcNAc...) asparagine glycan is attached at Asn43.

The protein resides in the secreted. The chain is Ovomucoid from Guttera pucherani (Eastern crested guineafowl).